We begin with the raw amino-acid sequence, 373 residues long: tRNA-specific 2-thiouridylase MnmA (373 aa).

ATP-binding positions include glycine 12–serine 19 and methionine 38. Positions asparagine 98–aspartate 100 are interaction with target base in tRNA. The Nucleophile role is filled by cysteine 103. Cysteines 103 and 200 form a disulfide. Residue glycine 127 participates in ATP binding. Positions lysine 150–glutamine 152 are interaction with tRNA. The Cysteine persulfide intermediate role is filled by cysteine 200. The interval arginine 312–tyrosine 313 is interaction with tRNA.

The protein belongs to the MnmA/TRMU family.

The protein resides in the cytoplasm. It carries out the reaction S-sulfanyl-L-cysteinyl-[protein] + uridine(34) in tRNA + AH2 + ATP = 2-thiouridine(34) in tRNA + L-cysteinyl-[protein] + A + AMP + diphosphate + H(+). In terms of biological role, catalyzes the 2-thiolation of uridine at the wobble position (U34) of tRNA, leading to the formation of s(2)U34. In Streptococcus pneumoniae (strain 70585), this protein is tRNA-specific 2-thiouridylase MnmA.